Here is a 402-residue protein sequence, read N- to C-terminus: Arginine deiminase (402 aa).

The active-site Amidino-cysteine intermediate is the Cys392.

The protein belongs to the arginine deiminase family.

It localises to the cytoplasm. It carries out the reaction L-arginine + H2O = L-citrulline + NH4(+). It participates in amino-acid degradation; L-arginine degradation via ADI pathway; carbamoyl phosphate from L-arginine: step 1/2. This is Arginine deiminase (arcA) from Mycobacterium bovis (strain ATCC BAA-935 / AF2122/97).